A 112-amino-acid polypeptide reads, in one-letter code: Probable head completion protein 2 (112 aa).

It belongs to the skunalikevirus head completion protein 2 family.

It localises to the virion. Its function is as follows. Probably functions as a stopper that is part of the head-tail connector and that locks the viral DNA in the capsid. During assembly, functions as a docking platform which the preassembled tail can bind to. Plays a role in morphogenesis of the virion capsid after genome packaging. The sequence is that of Probable head completion protein 2 from Lactococcus phage p2 (Lactococcus lactis bacteriophage p2).